A 431-amino-acid chain; its full sequence is DNA polymerase delta subunit 2 (431 aa).

It belongs to the DNA polymerase delta/II small subunit family. As to quaternary structure, component of both the DNA polymerase delta and DNA polymerase zeta complexes. The DNA polymerase delta complex consisting of three subunits: the catalytic subunit PolD1 and two accessory subunits PolD2/Pol31 and PolD3/Pol32. Within the delta complex, interacts with both PolD1 and PolD3, and is able to interact with PolD1 in the absence of PolD3. Component of the DNA polymerase zeta complex consisting of four subunits: the catalytic subunit PolZ1 and three accessory subunits PolZ2/Rev7, PolD2/Pol31 and PolD3/Pol32. In terms of tissue distribution, expressed in ovaries and embryos (at the protein level).

It localises to the nucleus. It is found in the nucleoplasm. Functionally, accessory component of both the DNA polymerase delta complex and possibly the DNA polymerase zeta complex. As a component of the delta complex, participates in high fidelity genome replication, including lagging strand synthesis, DNA recombination and repair. Appears to promote the function of the DNA pol-delta complex accessory subunit PolD3 in both embryonic and postembryonic somatic cells. This Drosophila melanogaster (Fruit fly) protein is DNA polymerase delta subunit 2.